Here is a 949-residue protein sequence, read N- to C-terminus: Isoleucine--tRNA ligase (949 aa).

Residues 58-68 (PYANGDIHIGH) carry the 'HIGH' region motif. Glutamate 567 contributes to the L-isoleucyl-5'-AMP binding site. Positions 608–612 (KMSKS) match the 'KMSKS' region motif. Lysine 611 provides a ligand contact to ATP. Residues cysteine 912, cysteine 915, cysteine 932, and cysteine 935 each coordinate Zn(2+).

Belongs to the class-I aminoacyl-tRNA synthetase family. IleS type 1 subfamily. As to quaternary structure, monomer. Zn(2+) serves as cofactor.

It is found in the cytoplasm. The enzyme catalyses tRNA(Ile) + L-isoleucine + ATP = L-isoleucyl-tRNA(Ile) + AMP + diphosphate. In terms of biological role, catalyzes the attachment of isoleucine to tRNA(Ile). As IleRS can inadvertently accommodate and process structurally similar amino acids such as valine, to avoid such errors it has two additional distinct tRNA(Ile)-dependent editing activities. One activity is designated as 'pretransfer' editing and involves the hydrolysis of activated Val-AMP. The other activity is designated 'posttransfer' editing and involves deacylation of mischarged Val-tRNA(Ile). The sequence is that of Isoleucine--tRNA ligase from Vibrio cholerae serotype O1 (strain ATCC 39315 / El Tor Inaba N16961).